The sequence spans 183 residues: MASSSPRRQELLKQLGLEFESYAPEIDESVQYNETVEAYVERLAREKANTILQQFPQSIIIAADTSLSIDGKIIGKPESKQHAFDIWSTLSGRRHDVFSGICVAASNAIHSCVVKTSVEFQTLSMADMELYWATGEPLGKAGAYAIQGIAAQFIPRIEGSYTNVVGLPLFETIQLLKRVKAFN.

Asp-64 (proton acceptor) is an active-site residue.

The protein belongs to the Maf family. YhdE subfamily. It depends on a divalent metal cation as a cofactor.

The protein resides in the cytoplasm. It catalyses the reaction dTTP + H2O = dTMP + diphosphate + H(+). The enzyme catalyses UTP + H2O = UMP + diphosphate + H(+). Its function is as follows. Nucleoside triphosphate pyrophosphatase that hydrolyzes dTTP and UTP. May have a dual role in cell division arrest and in preventing the incorporation of modified nucleotides into cellular nucleic acids. In Acinetobacter baylyi (strain ATCC 33305 / BD413 / ADP1), this protein is dTTP/UTP pyrophosphatase.